The chain runs to 68 residues: UPF0434 protein H16_A0605 (68 aa).

Belongs to the UPF0434 family.

The polypeptide is UPF0434 protein H16_A0605 (Cupriavidus necator (strain ATCC 17699 / DSM 428 / KCTC 22496 / NCIMB 10442 / H16 / Stanier 337) (Ralstonia eutropha)).